The primary structure comprises 197 residues: Nascent polypeptide-associated complex subunit alpha (197 aa).

Positions 1–20 are enriched in acidic residues; the sequence is MAEPVEDSVDEISSEGDSDV. Disordered regions lie at residues 1-46 and 120-154; these read MAEP…RKLL and GADR…SKAD. The region spanning 36–101 is the NAC-A/B domain; the sequence is DKNERKSRKL…AKVEDMSQNS (66 aa). A compositionally biased stretch (basic and acidic residues) spans 134 to 154; sequence SGHDHAHDHDHSHGDCASKAD. A UBA domain is found at 158–195; sequence VNQSDIDLVVSQVGCTREQAVEALIKNKGDIVETIMQL.

This sequence belongs to the NAC-alpha family.

Its function is as follows. May promote appropriate targeting of ribosome-nascent polypeptide complexes. The protein is Nascent polypeptide-associated complex subunit alpha of Babesia divergens.